Reading from the N-terminus, the 305-residue chain is Carbonic anhydrase 4 (305 aa).

The first 17 residues, 1–17, serve as a signal peptide directing secretion; sequence MQLLLALLALAYVAPST. The 259-residue stretch at 20–278 folds into the Alpha-carbonic anhydrase domain; the sequence is SGWCYEIQTK…LGKRQVFKSH (259 aa). Cystine bridges form between Cys-23–Cys-35 and Cys-45–Cys-222. The Proton donor/acceptor role is filled by His-87. The Zn(2+) site is built by His-114 and His-116. Residue Asn-123 is glycosylated (N-linked (GlcNAc...) asparagine). Residue His-139 coordinates Zn(2+). N-linked (GlcNAc...) asparagine glycosylation occurs at Asn-214. Residue 218–219 participates in substrate binding; it reads TT. Ser-277 carries the GPI-anchor amidated serine lipid modification. Positions 278-305 are cleaved as a propeptide — removed in mature form; sequence HAPGQLLSLPLPTLLVPTLTCLVANFLQ.

This sequence belongs to the alpha-carbonic anhydrase family. In terms of assembly, interacts with SLC4A4. Zn(2+) serves as cofactor.

It localises to the cell membrane. It carries out the reaction hydrogencarbonate + H(+) = CO2 + H2O. With respect to regulation, inhibited by acetazolamide. Its function is as follows. Catalyzes the reversible hydration of carbon dioxide into bicarbonate and protons and thus is essential to maintaining intracellular and extracellular pH. May stimulate the sodium/bicarbonate transporter activity of SLC4A4 that acts in pH homeostasis. It is essential for acid overload removal from the retina and retina epithelium, and acid release in the choriocapillaris in the choroid. This is Carbonic anhydrase 4 (Ca4) from Mus musculus (Mouse).